Consider the following 442-residue polypeptide: Tubulin beta chain (442 aa).

The GTP site is built by Gln-11, Glu-69, Ser-138, Gly-142, Thr-143, Gly-144, Asn-204, and Asn-226. Glu-69 is a binding site for Mg(2+).

The protein belongs to the tubulin family. In terms of assembly, dimer of alpha and beta chains. A typical microtubule is a hollow water-filled tube with an outer diameter of 25 nm and an inner diameter of 15 nM. Alpha-beta heterodimers associate head-to-tail to form protofilaments running lengthwise along the microtubule wall with the beta-tubulin subunit facing the microtubule plus end conferring a structural polarity. Microtubules usually have 13 protofilaments but different protofilament numbers can be found in some organisms and specialized cells. It depends on Mg(2+) as a cofactor.

It is found in the cytoplasm. It localises to the cytoskeleton. Its function is as follows. Tubulin is the major constituent of microtubules, a cylinder consisting of laterally associated linear protofilaments composed of alpha- and beta-tubulin heterodimers. Microtubules grow by the addition of GTP-tubulin dimers to the microtubule end, where a stabilizing cap forms. Below the cap, tubulin dimers are in GDP-bound state, owing to GTPase activity of alpha-tubulin. The chain is Tubulin beta chain from Trypanosoma cruzi.